The following is a 129-amino-acid chain: Glycine cleavage system H protein (129 aa).

Positions 24–106 constitute a Lipoyl-binding domain; it reads EAVVGITEHA…YGAGWLFRIK (83 aa). Lys-65 is modified (N6-lipoyllysine).

This sequence belongs to the GcvH family. As to quaternary structure, the glycine cleavage system is composed of four proteins: P, T, L and H. The cofactor is (R)-lipoate.

In terms of biological role, the glycine cleavage system catalyzes the degradation of glycine. The H protein shuttles the methylamine group of glycine from the P protein to the T protein. This is Glycine cleavage system H protein from Aeromonas hydrophila subsp. hydrophila (strain ATCC 7966 / DSM 30187 / BCRC 13018 / CCUG 14551 / JCM 1027 / KCTC 2358 / NCIMB 9240 / NCTC 8049).